A 315-amino-acid polypeptide reads, in one-letter code: tRNA dimethylallyltransferase (315 aa).

18–25 (GPTASGKT) contributes to the ATP binding site. 20 to 25 (TASGKT) lines the substrate pocket. Interaction with substrate tRNA stretches follow at residues 43–46 (DSAL), 167–171 (QRLSR), and 248–253 (RCVGYR).

The protein belongs to the IPP transferase family. As to quaternary structure, monomer. Mg(2+) serves as cofactor.

It catalyses the reaction adenosine(37) in tRNA + dimethylallyl diphosphate = N(6)-dimethylallyladenosine(37) in tRNA + diphosphate. Catalyzes the transfer of a dimethylallyl group onto the adenine at position 37 in tRNAs that read codons beginning with uridine, leading to the formation of N6-(dimethylallyl)adenosine (i(6)A). In Pseudoalteromonas atlantica (strain T6c / ATCC BAA-1087), this protein is tRNA dimethylallyltransferase.